A 161-amino-acid chain; its full sequence is Protein-export protein SecB (161 aa).

The protein belongs to the SecB family. Homotetramer, a dimer of dimers. One homotetramer interacts with 1 SecA dimer.

It is found in the cytoplasm. Functionally, one of the proteins required for the normal export of preproteins out of the cell cytoplasm. It is a molecular chaperone that binds to a subset of precursor proteins, maintaining them in a translocation-competent state. It also specifically binds to its receptor SecA. This Coxiella burnetii (strain CbuG_Q212) (Coxiella burnetii (strain Q212)) protein is Protein-export protein SecB.